The primary structure comprises 314 residues: Malate dehydrogenase (314 aa).

Residues 12–17 and D36 each bind NAD(+); that span reads GAGNIG. Substrate contacts are provided by R85 and R91. NAD(+) contacts are provided by residues N98 and 121-123; that span reads VTN. Residues N123 and R154 each coordinate substrate. H178 serves as the catalytic Proton acceptor.

Belongs to the LDH/MDH superfamily. MDH type 3 family.

The catalysed reaction is (S)-malate + NAD(+) = oxaloacetate + NADH + H(+). Its function is as follows. Catalyzes the reversible oxidation of malate to oxaloacetate. The polypeptide is Malate dehydrogenase (Wolbachia pipientis subsp. Culex pipiens (strain wPip)).